The following is a 937-amino-acid chain: MORC family CW-type zinc finger protein 4 (937 aa).

Residues 420–472 form a CW-type zinc finger; sequence KVPDQTWVQCDECLKWRKLPGKIDPSMLPARWFCYYNSHPKYRRCSVPEEQEL. Positions 429, 432, 453, and 464 each coordinate Zn(2+). Positions 606–637 are disordered; that stretch reads PEGENSHDKSSSERSTPPYLFPEYPEASKNTG. Residues 762–876 are a coiled coil; that stretch reads KLKNQRELEE…LEMLQKAQVS (115 aa).

Expressed at low levels in normal tissues, with highest expression levels in placenta and testis. Expression is significantly increased in subset of diffuse large B-cell lymphomas.

It is found in the nucleus. In terms of biological role, histone methylation reader which binds to non-methylated (H3K4me0), monomethylated (H3K4me1), dimethylated (H3K4me2) and trimethylated (H3K4me3) 'Lys-4' on histone H3. The order of binding preference is H3K4me3 &gt; H3K4me2 &gt; H3K4me1 &gt; H3K4me0. The sequence is that of MORC family CW-type zinc finger protein 4 (MORC4) from Homo sapiens (Human).